We begin with the raw amino-acid sequence, 380 residues long: Set1 complex component swd3 (380 aa).

7 WD repeats span residues 52–91 (GHEKSVTCVSVSPNKRWIATSSSDGTIKIWSALTFRLECT), 94–133 (GHYRGISQVKWATGSKYLASASDDKTIRIWDFEKRCSVRC), 136–177 (GHTN…RMLP), 179–219 (HSEP…KTLV), 221–262 (PINV…RIFD), 291–330 (NDSSYPDDAESFMHDAYLLIPSEDGTIQITDPSTKIIIDD), and 335–374 (SDDPETSLLNVTSLGPFIITSGTDPYVRVWAPSLLLSKHE). Serine 379 carries the post-translational modification Phosphoserine.

As to quaternary structure, component of the Set1 complex composed of ash2, sdc1, set1, shg1, spp1, swd1, swd2 and swd3.

The protein localises to the nucleus. Its function is as follows. The Set1 complex specifically methylates 'Lys-4' of histone H3. This is Set1 complex component swd3 from Schizosaccharomyces pombe (strain 972 / ATCC 24843) (Fission yeast).